A 1096-amino-acid polypeptide reads, in one-letter code: Inactive phospholipase C-like protein 1 (1096 aa).

The interval 1–101 (MAEGAASREA…KKTVSFSSMP (101 aa)) is disordered. Residue S48 is modified to Phosphoserine. Residues 49–60 (GVALPGAAGVPA) are compositionally biased toward low complexity. The residue at position 78 (S78) is a Phosphoserine. The tract at residues 83–222 (PSNQKCGGRK…NIWVSGLRYL (140 aa)) is interaction with PPP1C. T94 is modified (phosphothreonine). T94 carries the phosphothreonine; by PKA modification. Residue S96 is modified to Phosphoserine; by PKA. The PH domain maps to 114–224 (SFMQAGCELK…WVSGLRYLVS (111 aa)). A PI-PLC X-box domain is found at 399-543 (QDMTQPLSHY…LKNMIIVKGK (145 aa)). Positions 544–568 (KLPSESDLLEGEVTDEDEEAEMSRR) are interaction with GABA A beta subunit. A compositionally biased stretch (acidic residues) spans 550 to 563 (DLLEGEVTDEDEEA). The interval 550–569 (DLLEGEVTDEDEEAEMSRRM) is disordered. T557 is subject to Phosphothreonine. At S570 the chain carries Phosphoserine. Positions 586–702 (LSDLVSICKS…GYVLRPSIMR (117 aa)) constitute a PI-PLC Y-box domain. Residues 702 to 831 (RDEVSYFSAN…PGYRHVPLRS (130 aa)) form the C2 domain. Positions 1040-1060 (DLLKNAKNEAVENIKQIQLAC) form a coiled coil. A disordered region spans residues 1067-1096 (KGPGGGSEAKGKRSLEAIEEKESSEENGKL). The span at 1075–1096 (AKGKRSLEAIEEKESSEENGKL) shows a compositional bias: basic and acidic residues. S1080 is modified (phosphoserine).

Interacts with PPP2CA, Ins(1,4,5)P3, Ins(1,4,5,6)P4 GABARAP, GABA receptor beta subunits, GABA receptor gamma-2 subunits and PPP1C. May form a ternary complex with GABA receptor beta subunit and GABARAP. The formation of a ternary complex with GABA receptor beta subunit and GABARAP could be the key step for facilitating the association of GABARAP with the GABA receptor gamma-2 subunit and to allow it to be transported at the right destination. Phosphorylated by the catalytic subunit of PKA. Phosphorylation of Thr-94 resulted in dissociation of PPP1C from PRIP1.

It localises to the cytoplasm. Involved in an inositol phospholipid-based intracellular signaling cascade. Shows no PLC activity to phosphatidylinositol 4,5-bisphosphate and phosphatidylinositol. Component in the phospho-dependent endocytosis process of GABA A receptor. Acts as an inhibitor of PPP1C. Involved in the assembly and/or the trafficking of gamma-2 subunit-containing GABA A receptors. This chain is Inactive phospholipase C-like protein 1 (Plcl1), found in Mus musculus (Mouse).